The following is a 103-amino-acid chain: MATYAIVKTGGKQYKVAVGDVVKVEKLESEQGEKVSLPVALVVDGATVTTDAKALAKVAVTGEVLGHTKGPKIRIHKFKNKTGYHKRQGHRQQLTVLKVTGIA.

This sequence belongs to the bacterial ribosomal protein bL21 family. As to quaternary structure, part of the 50S ribosomal subunit. Contacts protein L20.

Functionally, this protein binds to 23S rRNA in the presence of protein L20. This is Large ribosomal subunit protein bL21 from Mycobacterium tuberculosis (strain ATCC 25618 / H37Rv).